A 218-amino-acid polypeptide reads, in one-letter code: Large ribosomal subunit protein bL25 (218 aa).

The disordered stretch occupies residues 186–218 (AVEEEVPAEDEEIMPEPEVIGEEDEGDEEEPEE).

This sequence belongs to the bacterial ribosomal protein bL25 family. CTC subfamily. As to quaternary structure, part of the 50S ribosomal subunit; part of the 5S rRNA/L5/L18/L25 subcomplex. Contacts the 5S rRNA. Binds to the 5S rRNA independently of L5 and L18.

This is one of the proteins that binds to the 5S RNA in the ribosome where it forms part of the central protuberance. This chain is Large ribosomal subunit protein bL25, found in Halothermothrix orenii (strain H 168 / OCM 544 / DSM 9562).